We begin with the raw amino-acid sequence, 146 residues long: Large ribosomal subunit protein eL32 (146 aa).

This sequence belongs to the eukaryotic ribosomal protein eL32 family.

This chain is Large ribosomal subunit protein eL32 (rpl32e), found in Methanocaldococcus jannaschii (strain ATCC 43067 / DSM 2661 / JAL-1 / JCM 10045 / NBRC 100440) (Methanococcus jannaschii).